The primary structure comprises 425 residues: Queuine tRNA-ribosyltransferase accessory subunit 2 (425 aa).

The interval 302–323 (QNGAQDLEKNSPEEDQEEEVVK) is disordered. Positions 351, 353, 356, and 382 each coordinate Zn(2+).

Belongs to the queuine tRNA-ribosyltransferase family. QTRT2 subfamily. As to quaternary structure, heterodimer of a catalytic subunit QTRT1 and an accessory subunit QTRT2. Requires Zn(2+) as cofactor.

The protein resides in the cytoplasm. Its subcellular location is the mitochondrion outer membrane. In terms of biological role, non-catalytic subunit of the queuine tRNA-ribosyltransferase (TGT) that catalyzes the base-exchange of a guanine (G) residue with queuine (Q) at position 34 (anticodon wobble position) in tRNAs with GU(N) anticodons (tRNA-Asp, -Asn, -His and -Tyr), resulting in the hypermodified nucleoside queuosine (7-(((4,5-cis-dihydroxy-2-cyclopenten-1-yl)amino)methyl)-7-deazaguanosine). This chain is Queuine tRNA-ribosyltransferase accessory subunit 2, found in Gallus gallus (Chicken).